Consider the following 79-residue polypeptide: Small ribosomal subunit protein bS16 (79 aa).

This sequence belongs to the bacterial ribosomal protein bS16 family.

This Marinobacter nauticus (strain ATCC 700491 / DSM 11845 / VT8) (Marinobacter aquaeolei) protein is Small ribosomal subunit protein bS16.